A 542-amino-acid chain; its full sequence is Phosphoacetylglucosamine mutase 2 (542 aa).

S77 functions as the Phosphoserine intermediate in the catalytic mechanism. S77 contacts Mg(2+). A phosphoserine mark is found at S77 and S82. Positions 292, 294, and 296 each coordinate Mg(2+). Substrate is bound by residues 385–387 (EAN), 510–514 (RSSGT), and R519.

Belongs to the phosphohexose mutase family. Mg(2+) serves as cofactor.

Its subcellular location is the cytoplasm. The protein resides in the nucleus. It catalyses the reaction N-acetyl-alpha-D-glucosamine 1-phosphate = N-acetyl-D-glucosamine 6-phosphate. It participates in nucleotide-sugar biosynthesis; UDP-N-acetyl-alpha-D-glucosamine biosynthesis; N-acetyl-alpha-D-glucosamine 1-phosphate from alpha-D-glucosamine 6-phosphate (route I): step 2/2. Its function is as follows. Catalyzes the conversion of GlcNAc-6-P into GlcNAc-1-P during the synthesis of uridine diphosphate/UDP-GlcNAc, which is a biosynthetic precursor of chitin and also supplies the amino sugars for N-linked oligosaccharides of glycoproteins. This Schizosaccharomyces pombe (strain 972 / ATCC 24843) (Fission yeast) protein is Phosphoacetylglucosamine mutase 2.